A 505-amino-acid chain; its full sequence is Histidine ammonia-lyase (505 aa).

The segment at residues 141 to 143 (ASG) is a cross-link (5-imidazolinone (Ala-Gly)). A 2,3-didehydroalanine (Ser) modification is found at Ser-142.

It belongs to the PAL/histidase family. Post-translationally, contains an active site 4-methylidene-imidazol-5-one (MIO), which is formed autocatalytically by cyclization and dehydration of residues Ala-Ser-Gly.

It localises to the cytoplasm. The catalysed reaction is L-histidine = trans-urocanate + NH4(+). The protein operates within amino-acid degradation; L-histidine degradation into L-glutamate; N-formimidoyl-L-glutamate from L-histidine: step 1/3. This Bacillus thuringiensis (strain Al Hakam) protein is Histidine ammonia-lyase.